Reading from the N-terminus, the 304-residue chain is Probable alpha-L-glutamate ligase 2 (304 aa).

The 184-residue stretch at 107-290 folds into the ATP-grasp domain; it reads HQLLARKGVG…IAGAIIDYIV (184 aa). ATP is bound by residues Lys144, 181 to 182, Asp190, and 214 to 216; these read EF and RSN. Residues Asp251, Glu263, and Asn265 each coordinate Mg(2+). Asp251, Glu263, and Asn265 together coordinate Mn(2+).

The protein belongs to the RimK family. It depends on Mg(2+) as a cofactor. Requires Mn(2+) as cofactor.

This chain is Probable alpha-L-glutamate ligase 2, found in Hahella chejuensis (strain KCTC 2396).